The sequence spans 228 residues: Claudin-10 (228 aa).

The chain crosses the membrane as a helical span at residues 1-21; sequence MASTASEIIAFMVSISGWVLV. Over 22–80 the chain is Extracellular; that stretch reads SSTLPTDYWKVSTIDGTVITTATYWANLWKACVTDSTGVSNCKDFPSMLALDGYIQACR. Residues 81-101 form a helical membrane-spanning segment; sequence GLMIAAVSLGFFGSIFALFGM. Residues 102-115 lie on the Cytoplasmic side of the membrane; it reads KCTKVGGSDKAKAK. A helical membrane pass occupies residues 116 to 136; that stretch reads IACLAGIVFILSGLCSMTGCS. The Extracellular portion of the chain corresponds to 137–160; the sequence is LYANKITTEFFDPLFVEQKYELGA. A helical membrane pass occupies residues 161–181; the sequence is ALFIGWAGASLCIIGGVIFCF. The Cytoplasmic portion of the chain corresponds to 182-228; it reads SISDNNKTPRYTYNGATSVMSSRTKYHGGEDFKTTNPSKQFDKNAYV.

The protein belongs to the claudin family. As to quaternary structure, can form homodimers both in trans (interaction between CLDN10 molecules in opposing membranes) and in cis (interaction between CLDN10 molecules within one membrane). In terms of assembly, interacts with CLDN19. Expressed in the kidney, eccrine sweat glands and in all layers of the epidermis. In the kidney, it is detected in the thick ascending limb of Henle's loop (TAL). In the sweat glands, it is expressed in cells from secretory portions, corresponding to the clear cells.

The protein resides in the cell junction. It is found in the tight junction. It localises to the cell membrane. It carries out the reaction Na(+)(in) = Na(+)(out). It catalyses the reaction Li(+)(in) = Li(+)(out). The catalysed reaction is K(+)(in) = K(+)(out). The enzyme catalyses Rb(+)(in) = Rb(+)(out). It carries out the reaction Cs(+)(in) = Cs(+)(out). It catalyses the reaction NH4(+)(in) = NH4(+)(out). The catalysed reaction is methylamine(out) = methylamine(in). The enzyme catalyses Mg(2+)(in) = Mg(2+)(out). It carries out the reaction Ca(2+)(in) = Ca(2+)(out). It catalyses the reaction Sr(2+)(in) = Sr(2+)(out). The catalysed reaction is chloride(in) = chloride(out). The enzyme catalyses nitrate(in) = nitrate(out). In terms of biological role, forms paracellular channels: polymerizes in tight junction strands with cation- and anion-selective channels through the strands, conveying epithelial permeability in a process known as paracellular tight junction permeability. Its function is as follows. Forms cation-selective paracellular channels. In sweat glands and in the thick ascending limb (TAL) of Henle's loop in kidney, it controls paracellular sodium permeability which is essential for proper sweat production and renal function. Functionally, forms anion-selective paracellular channels. In renal proximal tubules, it conveys selective chloride over hydrogencarbonate anion permeability which is required for renal chloride reabsorption and salt homeostasis. The protein is Claudin-10 of Homo sapiens (Human).